The following is a 91-amino-acid chain: Small ribosomal subunit protein uS19 (91 aa).

Belongs to the universal ribosomal protein uS19 family.

Its function is as follows. Protein S19 forms a complex with S13 that binds strongly to the 16S ribosomal RNA. The chain is Small ribosomal subunit protein uS19 from Leptothrix cholodnii (strain ATCC 51168 / LMG 8142 / SP-6) (Leptothrix discophora (strain SP-6)).